The sequence spans 350 residues: Spermidine/putrescine import ATP-binding protein PotA (350 aa).

Residues 6 to 236 enclose the ABC transporter domain; the sequence is LELRNVTKDY…PENLWVAKFI (231 aa). 38-45 contributes to the ATP binding site; it reads GPSGCGKT.

It belongs to the ABC transporter superfamily. Spermidine/putrescine importer (TC 3.A.1.11.1) family. In terms of assembly, the complex is composed of two ATP-binding proteins (PotA), two transmembrane proteins (PotB and PotC) and a solute-binding protein (PotD).

It is found in the cell membrane. The enzyme catalyses ATP + H2O + polyamine-[polyamine-binding protein]Side 1 = ADP + phosphate + polyamineSide 2 + [polyamine-binding protein]Side 1.. In terms of biological role, part of the ABC transporter complex PotABCD involved in spermidine/putrescine import. Responsible for energy coupling to the transport system. This chain is Spermidine/putrescine import ATP-binding protein PotA, found in Mesoplasma florum (strain ATCC 33453 / NBRC 100688 / NCTC 11704 / L1) (Acholeplasma florum).